A 1499-amino-acid chain; its full sequence is ABC multidrug transporter A-2 (1499 aa).

Disordered stretches follow at residues 1–66 (MAMQ…IDQE) and 80–107 (QISQKSAGPTNTFLDPSSDPELDPNSDK). Polar residues predominate over residues 16–30 (ISSSAGQEVASTIRR). Basic and acidic residues predominate over residues 31–51 (QFTDADADRIVETPLGEKADS). Residues 80-94 (QISQKSAGPTNTFLD) show a composition bias toward polar residues. Residues 166 to 415 (LRSILGCRNR…FIDMGFDCPD (250 aa)) enclose the ABC transporter 1 domain. The N-linked (GlcNAc...) asparagine glycan is linked to asparagine 339. Helical transmembrane passes span 526-546 (MTLATVIGNSIMAFIVSSVFY), 561-581 (LLFFAILLNAFASSLEILTLW), 606-626 (MIVDLPSKFLVSVVFNLILYF), 635-655 (GHFFVFYLFSVTITLTMSNIF), and 669-689 (MVPSSIFMMILVIYTGFTIPV). Asparagine 763 carries N-linked (GlcNAc...) asparagine glycosylation. A helical membrane pass occupies residues 778 to 798 (GIILGFFFFFLAAYIICSELV). Positions 857-1100 (FHWQDVCYDI…LIKYFENKGS (244 aa)) constitute an ABC transporter 2 domain. 893 to 900 (GVTGAGKT) is a binding site for ATP. 5 consecutive transmembrane segments (helical) span residues 1193-1213 (YIYSKAATSIIPPLFIGFTFW), 1227-1247 (FAIFMLLVIFPNLVQQMMPYF), 1268-1288 (AFMLASILVELPWNILMAVPA), 1317-1337 (LLILIFMMFTSTFSSMIIAGI), and 1353-1373 (LCLIFNGVLASPSALPGFWIF). N-linked (GlcNAc...) asparagine glycosylation occurs at asparagine 1414. The chain crosses the membrane as a helical span at residues 1466–1486 (GLLFVYIVFNIFAAIFLYWLI).

The protein belongs to the ABC transporter superfamily. ABCG family. PDR (TC 3.A.1.205) subfamily.

It is found in the cell membrane. It carries out the reaction itraconazole(in) + ATP + H2O = itraconazole(out) + ADP + phosphate + H(+). The enzyme catalyses voriconazole(in) + ATP + H2O = voriconazole(out) + ADP + phosphate + H(+). With respect to regulation, the efflux inhibitor FK506 impairs the transport activity. Its function is as follows. Pleiotropic ABC efflux transporter that confers resistance to structurally and functionally unrelated compounds including azoles such as itraconazole, posaconazole, and voriconazole. The polypeptide is ABC multidrug transporter A-2 (Aspergillus fumigatus (strain ATCC MYA-4609 / CBS 101355 / FGSC A1100 / Af293) (Neosartorya fumigata)).